The chain runs to 313 residues: Olfactory receptor 4Q3 (313 aa).

Topologically, residues 1–25 are extracellular; the sequence is MKKEQDSNVTEFVLLGLSSSWELQL. The N-linked (GlcNAc...) asparagine glycan is linked to Asn8. Residues 26–49 traverse the membrane as a helical segment; sequence FLFLLFLFFYIAIVLGNLLIVVTV. Over 50 to 58 the chain is Cytoplasmic; that stretch reads QAHAHLLQS. The helical transmembrane segment at 59-80 threads the bilayer; that stretch reads PMYYFLGHLSFIDLCLSCVTVP. Topologically, residues 81–101 are extracellular; the sequence is KMLGDFLQQGKSISFSGCLAQ. Cys98 and Cys190 are disulfide-bonded. The chain crosses the membrane as a helical span at residues 102–121; that stretch reads IYFLHFLGASEMFLLTVMAY. Residues 122–140 lie on the Cytoplasmic side of the membrane; it reads DRYVAICNPLRYLTVMNPQ. The chain crosses the membrane as a helical span at residues 141-159; that stretch reads LCLWLVLACWCGGFIHSIM. The Extracellular portion of the chain corresponds to 160–196; it reads QVILVIQLPFCGPNELDNFYCDVPQVIKLACMDTYVV. The helical transmembrane segment at 197–220 threads the bilayer; sequence EVLVIANSGLLSLVCFLVLLFSYA. Topologically, residues 221–236 are cytoplasmic; sequence IILITLRTHFCQGQNK. Residues 237-259 traverse the membrane as a helical segment; the sequence is VFSTCASHLTVVSLIFVPCVFIY. The Extracellular portion of the chain corresponds to 260-270; sequence LRPFCSFSVDK. A helical membrane pass occupies residues 271 to 290; it reads IFSLFYTVITPMLNPLIYTL. Residues 291 to 313 lie on the Cytoplasmic side of the membrane; it reads RNTDMKTAMKKLRIKPCGIPLPC.

This sequence belongs to the G-protein coupled receptor 1 family.

It localises to the cell membrane. In terms of biological role, odorant receptor. The protein is Olfactory receptor 4Q3 (OR4Q3) of Homo sapiens (Human).